The sequence spans 102 residues: UPF0235 protein msl4154 (102 aa).

The protein belongs to the UPF0235 family.

The chain is UPF0235 protein msl4154 from Mesorhizobium japonicum (strain LMG 29417 / CECT 9101 / MAFF 303099) (Mesorhizobium loti (strain MAFF 303099)).